The following is a 363-amino-acid chain: Aminomethyltransferase (363 aa).

The protein belongs to the GcvT family. As to quaternary structure, the glycine cleavage system is composed of four proteins: P, T, L and H.

The enzyme catalyses N(6)-[(R)-S(8)-aminomethyldihydrolipoyl]-L-lysyl-[protein] + (6S)-5,6,7,8-tetrahydrofolate = N(6)-[(R)-dihydrolipoyl]-L-lysyl-[protein] + (6R)-5,10-methylene-5,6,7,8-tetrahydrofolate + NH4(+). The glycine cleavage system catalyzes the degradation of glycine. The polypeptide is Aminomethyltransferase (Picosynechococcus sp. (strain ATCC 27264 / PCC 7002 / PR-6) (Agmenellum quadruplicatum)).